We begin with the raw amino-acid sequence, 108 residues long: Small ribosomal subunit protein eS25B (108 aa).

Low complexity predominate over residues 1-20; it reads MPPKQQLSKAAKAAAALAGG. Residues 1–30 form a disordered region; sequence MPPKQQLSKAAKAAAALAGGKKSKKKWSKK. Residue Pro2 is modified to N,N-dimethylproline; by NTM1. The span at 21-30 shows a compositional bias: basic residues; that stretch reads KKSKKKWSKK.

The protein belongs to the eukaryotic ribosomal protein eS25 family. In terms of assembly, component of the small ribosomal subunit (SSU). Mature yeast ribosomes consist of a small (40S) and a large (60S) subunit. The 40S small subunit contains 1 molecule of ribosomal RNA (18S rRNA) and 33 different proteins (encoded by 57 genes). The large 60S subunit contains 3 rRNA molecules (25S, 5.8S and 5S rRNA) and 46 different proteins (encoded by 81 genes).

The protein resides in the cytoplasm. Functionally, component of the ribosome, a large ribonucleoprotein complex responsible for the synthesis of proteins in the cell. The small ribosomal subunit (SSU) binds messenger RNAs (mRNAs) and translates the encoded message by selecting cognate aminoacyl-transfer RNA (tRNA) molecules. The large subunit (LSU) contains the ribosomal catalytic site termed the peptidyl transferase center (PTC), which catalyzes the formation of peptide bonds, thereby polymerizing the amino acids delivered by tRNAs into a polypeptide chain. The nascent polypeptides leave the ribosome through a tunnel in the LSU and interact with protein factors that function in enzymatic processing, targeting, and the membrane insertion of nascent chains at the exit of the ribosomal tunnel. The polypeptide is Small ribosomal subunit protein eS25B (Saccharomyces cerevisiae (strain ATCC 204508 / S288c) (Baker's yeast)).